The following is a 329-amino-acid chain: Replication factor C small subunit 1 (329 aa).

44-51 (GPPGTGKT) contacts ATP.

Belongs to the activator 1 small subunits family. RfcS subfamily. In terms of assembly, heteromultimer composed of small subunits (RfcS) and large subunits (RfcL).

Part of the RFC clamp loader complex which loads the PCNA sliding clamp onto DNA. The sequence is that of Replication factor C small subunit 1 from Pyrobaculum arsenaticum (strain DSM 13514 / JCM 11321 / PZ6).